A 322-amino-acid polypeptide reads, in one-letter code: Cytochrome c biogenesis protein CcsA (322 aa).

The next 7 membrane-spanning stretches (helical) occupy residues 9–29 (ILTHISFSTISIVITIHLITL), 44–64 (GMIVTFFSITGFLVSRWVSSG), 68–88 (LSNLYESLIFLSWALYILHTI), 143–163 (MLLSYATLLCGSLLSAAILII), 226–246 (IISLGFTLLTIGILCGAVWAN), 260–274 (TWAFITWTIFAIYLH), and 289–309 (IASIGFLIIWICYFGINLLGI).

Belongs to the CcmF/CycK/Ccl1/NrfE/CcsA family. In terms of assembly, may interact with Ccs1.

The protein localises to the plastid. It is found in the chloroplast thylakoid membrane. Its function is as follows. Required during biogenesis of c-type cytochromes (cytochrome c6 and cytochrome f) at the step of heme attachment. In Hordeum vulgare (Barley), this protein is Cytochrome c biogenesis protein CcsA.